A 341-amino-acid polypeptide reads, in one-letter code: 4-amino-5-hydroxymethyl-2-methylpyrimidine phosphate synthase (341 aa).

The residue at position 62 (Lys62) is an N6-(pyridoxal phosphate)lysine. His66 is an active-site residue. Position 115–118 (115–118 (GEFG)) interacts with pyridoxal 5'-phosphate. Residues 195 to 199 (CCCFC) carry the CCCFC; essential for catalytic activity, may be the site of iron coordination motif.

The protein belongs to the NMT1/THI5 family. Homodimer. It depends on Fe cation as a cofactor.

It carries out the reaction N(6)-(pyridoxal phosphate)-L-lysyl-[4-amino-5-hydroxymethyl-2-methylpyrimidine phosphate synthase] + L-histidyl-[4-amino-5-hydroxymethyl-2-methylpyrimidine phosphate synthase] + 2 Fe(3+) + 4 H2O = L-lysyl-[4-amino-5-hydroxymethyl-2-methylpyrimidine phosphate synthase] + (2S)-2-amino-5-hydroxy-4-oxopentanoyl-[4-amino-5-hydroxymethyl-2-methylpyrimidine phosphate synthase] + 4-amino-2-methyl-5-(phosphooxymethyl)pyrimidine + 3-oxopropanoate + 2 Fe(2+) + 2 H(+). It functions in the pathway cofactor biosynthesis; thiamine diphosphate biosynthesis. Its function is as follows. Responsible for the formation of the pyrimidine heterocycle in the thiamine biosynthesis pathway. Catalyzes the formation of hydroxymethylpyrimidine phosphate (HMP-P) from histidine and pyridoxal phosphate (PLP). The protein uses PLP and the active site histidine to form HMP-P, generating an inactive enzyme. The enzyme can only undergo a single turnover, which suggests it is a suicide enzyme. The chain is 4-amino-5-hydroxymethyl-2-methylpyrimidine phosphate synthase from Uromyces fabae (Rust fungus).